The following is a 611-amino-acid chain: Poly(3-hydroxyalkanoate) polymerase subunit PhaC (611 aa).

C349 is an active-site residue.

It belongs to the PHA/PHB synthase family. Type I PhaC subfamily. Monomer.

The protein resides in the cytoplasm. It catalyses the reaction (3R)-3-hydroxybutanoyl-CoA + [(3R)-hydroxybutanoate](n) = [(3R)-hydroxybutanoate](n+1) + CoA. It functions in the pathway biopolymer metabolism; poly-(R)-3-hydroxybutanoate biosynthesis. Polymerizes D(-)-3-hydroxybutyryl-CoA to create PHB which consists of thousands of hydroxybutyrate molecules linked end to end. PHB serves as an intracellular energy reserve material when cells grow under conditions of nutrient limitation. The protein is Poly(3-hydroxyalkanoate) polymerase subunit PhaC of Rhizobium meliloti (strain 1021) (Ensifer meliloti).